A 332-amino-acid chain; its full sequence is Probable allantoicase (332 aa).

It belongs to the allantoicase family.

It catalyses the reaction allantoate + H2O = (S)-ureidoglycolate + urea. It participates in nitrogen metabolism; (S)-allantoin degradation; (S)-ureidoglycolate from allantoate (aminidohydrolase route): step 1/1. The sequence is that of Probable allantoicase from Pseudomonas aeruginosa (strain UCBPP-PA14).